The chain runs to 986 residues: P3N-PIPO polyprotein (986 aa).

Positions 141–284 (KLTEGQMNHL…QGVMDSMVQF (144 aa)) constitute a Peptidase S30 domain. Catalysis depends on for P1 proteinase activity residues histidine 192, aspartate 201, and serine 235. The short motif at 334-337 (KITC) is the Involved in interaction with stylet and aphid transmission element. The Involved in virions binding and aphid transmission signature appears at 592–594 (PTK). In terms of domain architecture, Peptidase C6 spans 618 to 740 (LYIARQGFCY…ESDIKHYRVG (123 aa)). Active-site for helper component proteinase activity residues include cysteine 626 and histidine 699.

Belongs to the potyviridae P3N-PIPO polyprotein family. Interacts (via PIPO domain) with host PCaP1 protein; this interaction may help to anchor the movement complex to the plasma membrane from which the complex could move to the plasmodesmata. In terms of processing, potyviral RNA is expressed as two polyproteins which undergo post-translational proteolytic processing. Genome polyprotein is processed by NIa-pro, P1 and HC-pro proteinases resulting in the production of at least ten individual proteins. P3N-PIPO is cleaved by P1 and HC-pro proteinases resulting in the production of three individual proteins. The P1 proteinase and the HC-pro cleave only their respective C-termini autocatalytically.

It localises to the host cell junction. The protein resides in the host plasmodesma. The catalysed reaction is Hydrolyzes a Gly-|-Gly bond at its own C-terminus, commonly in the sequence -Tyr-Xaa-Val-Gly-|-Gly, in the processing of the potyviral polyprotein.. Required for aphid transmission and also has proteolytic activity. Only cleaves a Gly-Gly dipeptide at its own C-terminus. Interacts with virions and aphid stylets. Acts as a suppressor of RNA-mediated gene silencing, also known as post-transcriptional gene silencing (PTGS), a mechanism of plant viral defense that limits the accumulation of viral RNAs. May have RNA-binding activity. Its function is as follows. Allows efficient cell to cell propagation, by bypassing the host cell wall barrier. Transports viral genome to neighboring plant cells directly through plasmosdesmata, without any budding. This Capsicum (peppers) protein is P3N-PIPO polyprotein.